A 319-amino-acid polypeptide reads, in one-letter code: Cell surface A33 antigen (319 aa).

The first 21 residues, 1–21 (MLGKAGSVVWMLCAIWVAADA), serve as a signal peptide directing secretion. One can recognise an Ig-like V-type domain in the interval 22–134 (LTVETTQDIL…QDVNAKSRVR (113 aa)). The Extracellular segment spans residues 22-235 (LTVETTQDIL…VAPRPPSMNI (214 aa)). Intrachain disulfides connect cysteine 43-cysteine 117, cysteine 146-cysteine 222, and cysteine 162-cysteine 211. N-linked (GlcNAc...) asparagine glycosylation is found at asparagine 99, asparagine 112, asparagine 200, and asparagine 223. An Ig-like C2-type domain is found at 140–227 (PPSKPDCSIQ…GIESCNITVA (88 aa)). Residues 236–256 (ALYAGIAGGVFVALIIIGVIV) traverse the membrane as a helical segment. Residues 257 to 319 (YCCCCREKDD…GRSTPDQPFQ (63 aa)) are Cytoplasmic-facing. Basic and acidic residues-rich tracts occupy residues 267-276 (KDQDREDARP) and 284-308 (PKKEQKEISRGREDEDDHRHEDRWS). Residues 267–319 (KDQDREDARPNRAAYQVPKKEQKEISRGREDEDDHRHEDRWSSGRSTPDQPFQ) form a disordered region. Polar residues predominate over residues 309 to 319 (SGRSTPDQPFQ).

In terms of processing, palmitoylated.

The protein resides in the membrane. Functionally, may play a role in cell-cell recognition and signaling. The protein is Cell surface A33 antigen (Gpa33) of Mus musculus (Mouse).